A 338-amino-acid chain; its full sequence is Nicotinate-nucleotide--dimethylbenzimidazole phosphoribosyltransferase (338 aa).

E305 acts as the Proton acceptor in catalysis.

It belongs to the CobT family.

The catalysed reaction is 5,6-dimethylbenzimidazole + nicotinate beta-D-ribonucleotide = alpha-ribazole 5'-phosphate + nicotinate + H(+). It functions in the pathway nucleoside biosynthesis; alpha-ribazole biosynthesis; alpha-ribazole from 5,6-dimethylbenzimidazole: step 1/2. Functionally, catalyzes the synthesis of alpha-ribazole-5'-phosphate from nicotinate mononucleotide (NAMN) and 5,6-dimethylbenzimidazole (DMB). This chain is Nicotinate-nucleotide--dimethylbenzimidazole phosphoribosyltransferase, found in Sinorhizobium fredii (strain NBRC 101917 / NGR234).